We begin with the raw amino-acid sequence, 238 residues long: 1-(5-phosphoribosyl)-5-[(5-phosphoribosylamino)methylideneamino] imidazole-4-carboxamide isomerase (238 aa).

D8 acts as the Proton acceptor in catalysis. D130 (proton donor) is an active-site residue.

Belongs to the HisA/HisF family.

Its subcellular location is the cytoplasm. The catalysed reaction is 1-(5-phospho-beta-D-ribosyl)-5-[(5-phospho-beta-D-ribosylamino)methylideneamino]imidazole-4-carboxamide = 5-[(5-phospho-1-deoxy-D-ribulos-1-ylimino)methylamino]-1-(5-phospho-beta-D-ribosyl)imidazole-4-carboxamide. The protein operates within amino-acid biosynthesis; L-histidine biosynthesis; L-histidine from 5-phospho-alpha-D-ribose 1-diphosphate: step 4/9. The chain is 1-(5-phosphoribosyl)-5-[(5-phosphoribosylamino)methylideneamino] imidazole-4-carboxamide isomerase from Methanococcus maripaludis (strain C6 / ATCC BAA-1332).